The sequence spans 515 residues: Endoglucanase 2 (515 aa).

The signal sequence occupies residues 1 to 31; that stretch reads MVAKPRSRCCCCSVFIGVIILIAIIIAVIFT. A glycan (N-linked (GlcNAc...) asparagine) is linked at Asn37. Asp100 functions as the Nucleophile in the catalytic mechanism. N-linked (GlcNAc...) asparagine glycosylation occurs at Asn250. His433 is an active-site residue. N-linked (GlcNAc...) asparagine glycosylation is present at Asn475. The active site involves Asp480. The N-linked (GlcNAc...) asparagine glycan is linked to Asn483. The active site involves Glu489.

It belongs to the glycosyl hydrolase 9 (cellulase E) family.

The protein localises to the secreted. The enzyme catalyses Endohydrolysis of (1-&gt;4)-beta-D-glucosidic linkages in cellulose, lichenin and cereal beta-D-glucans.. In Arabidopsis thaliana (Mouse-ear cress), this protein is Endoglucanase 2.